Reading from the N-terminus, the 729-residue chain is Polyribonucleotide nucleotidyltransferase (729 aa).

The Mg(2+) site is built by D510 and D516. The KH domain maps to 576-635; that stretch reads PRVISVKIPVDKIGEVIGPKGKMINQIQADSGAEITVEDDGTIYIGAADGTSAETARSAI. The 73-residue stretch at 647-719 folds into the S1 motif domain; sequence GERYLGTIVK…ARGKISLSPS (73 aa).

Belongs to the polyribonucleotide nucleotidyltransferase family. It depends on Mg(2+) as a cofactor.

It localises to the cytoplasm. The enzyme catalyses RNA(n+1) + phosphate = RNA(n) + a ribonucleoside 5'-diphosphate. In terms of biological role, involved in mRNA degradation. Catalyzes the phosphorolysis of single-stranded polyribonucleotides processively in the 3'- to 5'-direction. The sequence is that of Polyribonucleotide nucleotidyltransferase from Frankia alni (strain DSM 45986 / CECT 9034 / ACN14a).